The chain runs to 251 residues: Imidazole glycerol phosphate synthase subunit HisF (251 aa).

Residues Asp-11 and Asp-130 contribute to the active site.

This sequence belongs to the HisA/HisF family. In terms of assembly, heterodimer of HisH and HisF.

The protein resides in the cytoplasm. It carries out the reaction 5-[(5-phospho-1-deoxy-D-ribulos-1-ylimino)methylamino]-1-(5-phospho-beta-D-ribosyl)imidazole-4-carboxamide + L-glutamine = D-erythro-1-(imidazol-4-yl)glycerol 3-phosphate + 5-amino-1-(5-phospho-beta-D-ribosyl)imidazole-4-carboxamide + L-glutamate + H(+). It participates in amino-acid biosynthesis; L-histidine biosynthesis; L-histidine from 5-phospho-alpha-D-ribose 1-diphosphate: step 5/9. Its function is as follows. IGPS catalyzes the conversion of PRFAR and glutamine to IGP, AICAR and glutamate. The HisF subunit catalyzes the cyclization activity that produces IGP and AICAR from PRFAR using the ammonia provided by the HisH subunit. The sequence is that of Imidazole glycerol phosphate synthase subunit HisF from Streptococcus mutans serotype c (strain ATCC 700610 / UA159).